Here is a 444-residue protein sequence, read N- to C-terminus: Phosphoglucosamine mutase (444 aa).

The Phosphoserine intermediate role is filled by Ser99. Ser99, Asp242, Asp244, and Asp246 together coordinate Mg(2+). Ser99 carries the phosphoserine modification.

Belongs to the phosphohexose mutase family. Mg(2+) is required as a cofactor. Post-translationally, activated by phosphorylation.

It catalyses the reaction alpha-D-glucosamine 1-phosphate = D-glucosamine 6-phosphate. In terms of biological role, catalyzes the conversion of glucosamine-6-phosphate to glucosamine-1-phosphate. The sequence is that of Phosphoglucosamine mutase from Aliarcobacter butzleri (strain RM4018) (Arcobacter butzleri).